A 200-amino-acid chain; its full sequence is CASP-like protein 1U2 (200 aa).

Residues Met-1–Asn-33 are Cytoplasmic-facing. A helical transmembrane segment spans residues Phe-34–Ser-54. Over Thr-55 to Trp-77 the chain is Extracellular. Residues Leu-78–Phe-98 traverse the membrane as a helical segment. Topologically, residues Ser-99–Asp-120 are cytoplasmic. A helical membrane pass occupies residues Phe-121–Ala-141. Residues Arg-142–Gln-168 are Extracellular-facing. Residues Gly-169 to Ala-189 form a helical membrane-spanning segment. The Cytoplasmic portion of the chain corresponds to Ser-190–His-200.

Belongs to the Casparian strip membrane proteins (CASP) family. As to quaternary structure, homodimer and heterodimers.

It is found in the cell membrane. This chain is CASP-like protein 1U2, found in Physcomitrium patens (Spreading-leaved earth moss).